Consider the following 1181-residue polypeptide: Clustered mitochondria protein homolog (1181 aa).

The segment at 165 to 195 is disordered; it reads AKAEALAKNEEVSEDEESEPEDDTPMKQSTQ. The span at 176–187 shows a compositional bias: acidic residues; the sequence is VSEDEESEPEDD. The 244-residue stretch at 379-622 folds into the Clu domain; sequence DMARNQELLS…RLAPVDIAFL (244 aa). Residues 1130–1181 form a disordered region; that stretch reads GRLARQAPKPTATHQKEAPKKASKKTKGKGKGKDDKGEKLVAELKKKKAGKR. The segment covering 1150–1159 has biased composition (basic residues); the sequence is KASKKTKGKG. Positions 1160–1173 are enriched in basic and acidic residues; that stretch reads KGKDDKGEKLVAEL.

It belongs to the CLU family. In terms of assembly, may associate with the eukaryotic translation initiation factor 3 (eIF-3) complex.

The protein resides in the cytoplasm. In terms of biological role, mRNA-binding protein involved in proper cytoplasmic distribution of mitochondria. The chain is Clustered mitochondria protein homolog from Yarrowia lipolytica (strain CLIB 122 / E 150) (Yeast).